The following is a 155-amino-acid chain: 6,7-dimethyl-8-ribityllumazine synthase (155 aa).

Residues phenylalanine 24, 58–60, and 82–84 each bind 5-amino-6-(D-ribitylamino)uracil; these read AFE and AII. 87–88 contributes to the (2S)-2-hydroxy-3-oxobutyl phosphate binding site; the sequence is ST. The Proton donor role is filled by histidine 90. Residue phenylalanine 115 coordinates 5-amino-6-(D-ribitylamino)uracil. Arginine 129 is a binding site for (2S)-2-hydroxy-3-oxobutyl phosphate.

The protein belongs to the DMRL synthase family.

It carries out the reaction (2S)-2-hydroxy-3-oxobutyl phosphate + 5-amino-6-(D-ribitylamino)uracil = 6,7-dimethyl-8-(1-D-ribityl)lumazine + phosphate + 2 H2O + H(+). Its pathway is cofactor biosynthesis; riboflavin biosynthesis; riboflavin from 2-hydroxy-3-oxobutyl phosphate and 5-amino-6-(D-ribitylamino)uracil: step 1/2. In terms of biological role, catalyzes the formation of 6,7-dimethyl-8-ribityllumazine by condensation of 5-amino-6-(D-ribitylamino)uracil with 3,4-dihydroxy-2-butanone 4-phosphate. This is the penultimate step in the biosynthesis of riboflavin. This is 6,7-dimethyl-8-ribityllumazine synthase from Chlorobium luteolum (strain DSM 273 / BCRC 81028 / 2530) (Pelodictyon luteolum).